Here is a 213-residue protein sequence, read N- to C-terminus: Maleamate amidohydrolase (213 aa).

Cys154 (nucleophile) is an active-site residue.

The protein belongs to the isochorismatase family.

It carries out the reaction maleamate + H2O = maleate + NH4(+). It participates in cofactor degradation; nicotinate degradation. Functionally, maleamate amidase that transforms maleamate into maleate and ammonia in the aerobic nicotinate degradation pathway. The protein is Maleamate amidohydrolase (nicF) of Pseudomonas putida (strain ATCC 47054 / DSM 6125 / CFBP 8728 / NCIMB 11950 / KT2440).